Consider the following 103-residue polypeptide: N(4)-acetylcytidine amidohydrolase (103 aa).

The ASCH domain occupies 6–101 (ITFSQRFQDD…QTQFYVIEFK (96 aa)). Lys-21 (proton acceptor) is an active-site residue. Thr-24 (nucleophile) is an active-site residue. Residue Glu-74 is the Proton donor of the active site.

The protein belongs to the N(4)-acetylcytidine amidohydrolase family.

The catalysed reaction is N(4)-acetylcytidine + H2O = cytidine + acetate + H(+). It catalyses the reaction N(4)-acetyl-2'-deoxycytidine + H2O = 2'-deoxycytidine + acetate + H(+). It carries out the reaction N(4)-acetylcytosine + H2O = cytosine + acetate + H(+). In terms of biological role, catalyzes the hydrolysis of N(4)-acetylcytidine (ac4C). This chain is N(4)-acetylcytidine amidohydrolase (yqfB), found in Shigella boydii serotype 4 (strain Sb227).